The following is a 200-amino-acid chain: dITP/XTP pyrophosphatase (200 aa).

Residue 8–13 (TGNQGK) coordinates substrate. Residue aspartate 69 is the Proton acceptor of the active site. Position 69 (aspartate 69) interacts with Mg(2+). Residues serine 70, 154 to 157 (FGYD), lysine 177, and 182 to 183 (HR) each bind substrate.

Belongs to the HAM1 NTPase family. As to quaternary structure, homodimer. The cofactor is Mg(2+).

It carries out the reaction XTP + H2O = XMP + diphosphate + H(+). The catalysed reaction is dITP + H2O = dIMP + diphosphate + H(+). The enzyme catalyses ITP + H2O = IMP + diphosphate + H(+). In terms of biological role, pyrophosphatase that catalyzes the hydrolysis of nucleoside triphosphates to their monophosphate derivatives, with a high preference for the non-canonical purine nucleotides XTP (xanthosine triphosphate), dITP (deoxyinosine triphosphate) and ITP. Seems to function as a house-cleaning enzyme that removes non-canonical purine nucleotides from the nucleotide pool, thus preventing their incorporation into DNA/RNA and avoiding chromosomal lesions. This chain is dITP/XTP pyrophosphatase, found in Vibrio cholerae serotype O1 (strain ATCC 39315 / El Tor Inaba N16961).